The following is a 183-amino-acid chain: Phospholipase A2 inhibitor gamma subunit A1 (183 aa).

Intrachain disulfides connect cysteine 3–cysteine 28, cysteine 6–cysteine 13, cysteine 21–cysteine 49, cysteine 55–cysteine 76, cysteine 77–cysteine 82, cysteine 100–cysteine 125, cysteine 118–cysteine 147, and cysteine 151–cysteine 173. Asparagine 158 is a glycosylation site (N-linked (GlcNAc...) asparagine).

The protein belongs to the CNF-like-inhibitor family. In terms of assembly, heterodimer of subunit A and subunit B. In terms of tissue distribution, expressed by the liver.

It is found in the secreted. Its function is as follows. Phospholipase A2 (PA2) inhibitor. Inhibits the enzymatic activity of PA2 of Deinagkistrodon acutus. Also shows a wide anti-hemorrhage activities to D.acutus, Naja atra and Agkistrodon halys venom. The native protein is more potent than the recombinant one. The chain is Phospholipase A2 inhibitor gamma subunit A1 from Trimerodytes annularis (Red-bellied annulate keelback).